A 214-amino-acid chain; its full sequence is MRDPVETYMNLVPMVVEQTNRGERAYDIFSRLLKERIIFLTGPVEDGMSTLVVAQLLFLEAENPKKEISMYINSPGGVVTSGLAIYDTMQFIRPPVSTLCTGQAASMGSLLLAAGHKDMRFSLPNARIMVHQPSGGFQGQATDIMLHAQEILNLKKRLNEIYVHHTGQTYKAIEDALERDKFLTAEMAREFGIVDKVIDKRAEETASASGPKAP.

The active-site Nucleophile is S106. The active site involves H131.

Belongs to the peptidase S14 family. Fourteen ClpP subunits assemble into 2 heptameric rings which stack back to back to give a disk-like structure with a central cavity, resembling the structure of eukaryotic proteasomes.

It localises to the cytoplasm. It catalyses the reaction Hydrolysis of proteins to small peptides in the presence of ATP and magnesium. alpha-casein is the usual test substrate. In the absence of ATP, only oligopeptides shorter than five residues are hydrolyzed (such as succinyl-Leu-Tyr-|-NHMec, and Leu-Tyr-Leu-|-Tyr-Trp, in which cleavage of the -Tyr-|-Leu- and -Tyr-|-Trp bonds also occurs).. In terms of biological role, cleaves peptides in various proteins in a process that requires ATP hydrolysis. Has a chymotrypsin-like activity. Plays a major role in the degradation of misfolded proteins. The chain is ATP-dependent Clp protease proteolytic subunit from Rhodopseudomonas palustris (strain BisB5).